The chain runs to 139 residues: Holo-[acyl-carrier-protein] synthase (139 aa).

Mg(2+) contacts are provided by aspartate 8 and glutamate 61.

It belongs to the P-Pant transferase superfamily. AcpS family. Requires Mg(2+) as cofactor.

Its subcellular location is the cytoplasm. It catalyses the reaction apo-[ACP] + CoA = holo-[ACP] + adenosine 3',5'-bisphosphate + H(+). Transfers the 4'-phosphopantetheine moiety from coenzyme A to a Ser of acyl-carrier-protein. In Bradyrhizobium sp. (strain BTAi1 / ATCC BAA-1182), this protein is Holo-[acyl-carrier-protein] synthase.